Here is a 212-residue protein sequence, read N- to C-terminus: MASKFLREYKLVVVGGGGVGKSCLTIQLIQSHFVDEYDPTIEDSYRKQCVIDDEVALLDVLDTAGQEEYSAMREQYMRTGEGFLLVYSITSRQSFEEIMTFQQQILRVKDKDYFPIIVVGNKCDLDKERVVSEQEGESLARQFGCKFIETSAKSRINVENAFYDLVREIRRYNKEMSNPSGSGAFGARAPDSKMDVSEPGESAGCCGKCIVM.

15–22 (GGGGVGKS) is a binding site for GTP. The Effector region motif lies at 37–45 (YDPTIEDSY). GTP contacts are provided by residues 62–66 (DTAGQ) and 121–124 (NKCD). S-palmitoyl cysteine attachment occurs at residues Cys-205 and Cys-206. At Cys-209 the chain carries Cysteine methyl ester. A lipid anchor (S-geranylgeranyl cysteine) is attached at Cys-209. Positions 210 to 212 (IVM) are cleaved as a propeptide — removed in mature form.

It belongs to the small GTPase superfamily. Ras family.

It is found in the cell membrane. The enzyme catalyses GTP + H2O = GDP + phosphate + H(+). With respect to regulation, alternates between an inactive form bound to GDP and an active form bound to GTP. Activated by a guanine nucleotide-exchange factor (GEF) and inactivated by a GTPase-activating protein (GAP). This chain is Ras-like protein (rasA), found in Emericella nidulans (strain FGSC A4 / ATCC 38163 / CBS 112.46 / NRRL 194 / M139) (Aspergillus nidulans).